We begin with the raw amino-acid sequence, 260 residues long: Hydroxyethylthiazole kinase (260 aa).

M38 is a binding site for substrate. ATP is bound by residues K114 and S161. Substrate is bound at residue G188.

This sequence belongs to the Thz kinase family. Mg(2+) is required as a cofactor.

The catalysed reaction is 5-(2-hydroxyethyl)-4-methylthiazole + ATP = 4-methyl-5-(2-phosphooxyethyl)-thiazole + ADP + H(+). Its pathway is cofactor biosynthesis; thiamine diphosphate biosynthesis; 4-methyl-5-(2-phosphoethyl)-thiazole from 5-(2-hydroxyethyl)-4-methylthiazole: step 1/1. Catalyzes the phosphorylation of the hydroxyl group of 4-methyl-5-beta-hydroxyethylthiazole (THZ). This Campylobacter lari (strain RM2100 / D67 / ATCC BAA-1060) protein is Hydroxyethylthiazole kinase.